The following is a 1128-amino-acid chain: Testis-expressed protein 2 (1128 aa).

Disordered regions lie at residues 1–28 (MTSL…VQRS), 71–99 (AKED…GLSV), and 130–279 (PLAL…FFKV). The segment covering 130 to 186 (PLALSPGSSSSGPLASSPSVSSLSEQKTSSSSPLSSPSKSPVLSSSASSSALSSAKP) has biased composition (low complexity). At Ser195 the chain carries Phosphoserine. Residues 248–274 (QFTQPRNTGGDSKTAPSSPLTSPSDTR) are compositionally biased toward polar residues. At Thr261 the chain carries Phosphothreonine. 4 positions are modified to phosphoserine: Ser264, Ser265, Ser269, and Ser294. The interval 345-387 (KEEEGDSEGEGYGSDSNTSRSDHLKPTEDASKEVEPKGSQASS) is disordered. The span at 364-380 (RSDHLKPTEDASKEVEP) shows a compositional bias: basic and acidic residues. A run of 2 helical transmembrane segments spans residues 473–493 (TLGF…PYYM) and 495–515 (GLFL…WFFT). An N-linked (GlcNAc...) asparagine glycan is attached at Asn593. Over residues 645-671 (SKAQSDKEATEEKPPPEKELPSEDLKK) the composition is skewed to basic and acidic residues. Disordered regions lie at residues 645 to 688 (SKAQ…DPIL), 716 to 765 (RKPA…QKEL), 787 to 821 (QDNR…EEEQ), and 945 to 981 (ADSD…GYVG). Residues Ser733, Ser739, Ser745, Ser749, Ser752, Ser799, and Ser816 each carry the phosphoserine modification. The span at 736–751 (SSPSGHLSHSRSSSKG) shows a compositional bias: low complexity. The segment covering 796-806 (PVQSAESSPTA) has biased composition (polar residues). Residues 817 to 1102 (EEEEQEAWVN…MPNMDDVYIP (286 aa)) enclose the SMP-LTD domain. Over residues 946–963 (DSDEESSSAGSSEEDDPP) the composition is skewed to acidic residues.

It localises to the endoplasmic reticulum membrane. The protein resides in the nucleus membrane. During endoplasmic reticulum (ER) stress or when cellular ceramide levels increase, may induce contacts between the ER and medial-Golgi complex to facilitate non-vesicular transport of ceramides from the ER to the Golgi complex where they are converted to complex sphingolipids, preventing toxic ceramide accumulation. The polypeptide is Testis-expressed protein 2 (Tex2) (Mus musculus (Mouse)).